We begin with the raw amino-acid sequence, 111 residues long: uncharacterized protein (111 aa).

A helical transmembrane segment spans residues 27-47; it reads HLFHFPSISFFFFFFFFFFSF.

The protein resides in the membrane. This is an uncharacterized protein from Saccharomyces cerevisiae (strain ATCC 204508 / S288c) (Baker's yeast).